The chain runs to 333 residues: Chlorophyllide reductase 35.5 kDa chain (333 aa).

Residues 1-17 show a composition bias toward basic and acidic residues; it reads MTDAPELKAFDQRLRDE. The segment at 1–30 is disordered; that stretch reads MTDAPELKAFDQRLRDEAAEEPTLEVPQGE. ATP contacts are provided by residues 45 to 50 and Lys74; that span reads GIGKSF. Residue Ser49 coordinates Mg(2+). Cys130 and Cys165 together coordinate [4Fe-4S] cluster. 219 to 220 lines the ATP pocket; that stretch reads NK.

It belongs to the NifH/BchL/ChlL family. In terms of assembly, homodimer. Chlorophyllide reductase is composed of three subunits; BchX, BchY and BchZ. Requires [4Fe-4S] cluster as cofactor.

The catalysed reaction is 3-deacetyl-3-vinylbacteriochlorophyllide a + 2 oxidized [2Fe-2S]-[ferredoxin] + ADP + phosphate = chlorophyllide a + 2 reduced [2Fe-2S]-[ferredoxin] + ATP + H2O + H(+). The enzyme catalyses bacteriochlorophyllide a + 2 oxidized [2Fe-2S]-[ferredoxin] + ADP + phosphate = 3-acetyl-3-devinylchlorophyllide a + 2 reduced [2Fe-2S]-[ferredoxin] + ATP + H2O + H(+). It catalyses the reaction 3-deacetyl-3-(1-hydroxyethyl)bacteriochlorophyllide a + 2 oxidized [2Fe-2S]-[ferredoxin] + ADP + phosphate = 3-devinyl-3-(1-hydroxyethyl)chlorophyllide a + 2 reduced [2Fe-2S]-[ferredoxin] + ATP + H2O + H(+). It participates in porphyrin-containing compound metabolism; bacteriochlorophyll biosynthesis. Functionally, converts chlorophylls (Chl) into bacteriochlorophylls (BChl) by reducing ring B of the tetrapyrrole. The chain is Chlorophyllide reductase 35.5 kDa chain (bchX) from Cereibacter sphaeroides (strain ATCC 17023 / DSM 158 / JCM 6121 / CCUG 31486 / LMG 2827 / NBRC 12203 / NCIMB 8253 / ATH 2.4.1.) (Rhodobacter sphaeroides).